A 147-amino-acid chain; its full sequence is MSAPMVGMVVLVVTLGAAVLALSYRLWKLRQGGTAGIMRDIPAVGGHGWRHGVIRYRGEAAAFYRLSSLRLWPDRRLSRRGVEIVARRGPRGDEFDIMTDKIVVLELRDTTQDRRSGYEIALDQGALAAFLSWLESRPSPRTRRRSV.

Residues 3–23 (APMVGMVVLVVTLGAAVLALS) form a helical membrane-spanning segment.

It to M.tuberculosis Rv1312.

Its subcellular location is the membrane. This is an uncharacterized protein from Mycobacterium leprae (strain TN).